We begin with the raw amino-acid sequence, 395 residues long: Phosphoglycerate kinase (395 aa).

Substrate is bound by residues 21–23 (DLN), Arg-36, 59–62 (HLGR), Arg-113, and Arg-146. ATP contacts are provided by residues Lys-197, Glu-324, and 350–353 (GGDT).

It belongs to the phosphoglycerate kinase family. In terms of assembly, monomer.

It localises to the cytoplasm. The catalysed reaction is (2R)-3-phosphoglycerate + ATP = (2R)-3-phospho-glyceroyl phosphate + ADP. It participates in carbohydrate degradation; glycolysis; pyruvate from D-glyceraldehyde 3-phosphate: step 2/5. In Acinetobacter baumannii (strain ATCC 17978 / DSM 105126 / CIP 53.77 / LMG 1025 / NCDC KC755 / 5377), this protein is Phosphoglycerate kinase.